Reading from the N-terminus, the 401-residue chain is Stearoyl-[acyl-carrier-protein] 9-desaturase 3, chloroplastic (401 aa).

Residues 1–31 (MSMALLLTSPAMKQKPAVITSPRRGSSPSRR) form a disordered region. Residues 1–35 (MSMALLLTSPAMKQKPAVITSPRRGSSPSRRLRVS) constitute a chloroplast transit peptide. Fe cation is bound by residues E140, E178, H181, E231, E264, and H267.

It belongs to the fatty acid desaturase type 2 family. As to quaternary structure, homodimer. It depends on Fe(2+) as a cofactor. Ubiquitously expressed with a preference in leaves, flowers and stems.

The protein localises to the plastid. The protein resides in the chloroplast. The enzyme catalyses octadecanoyl-[ACP] + 2 reduced [2Fe-2S]-[ferredoxin] + O2 + 2 H(+) = (9Z)-octadecenoyl-[ACP] + 2 oxidized [2Fe-2S]-[ferredoxin] + 2 H2O. Its pathway is lipid metabolism; fatty acid metabolism. Functionally, converts stearoyl-ACP to oleoyl-ACP by introduction of a cis double bond between carbons 9 and 10 of the acyl chain. Also able to convert palmitoyl-ACP to palmitoleoyl-ACP at the C9 position. Exhibits delta-9 palmitoyl-[acyl-carrier-protein] desaturase (PAD) activity. Involved in omega-7 monounsaturated fatty acid biosynthesis, especially in the endosperm oil. The chain is Stearoyl-[acyl-carrier-protein] 9-desaturase 3, chloroplastic (S-ACP-DES3) from Arabidopsis thaliana (Mouse-ear cress).